The chain runs to 160 residues: Major pollen allergen Cor a 1 isoforms 5, 6, 11 and 16 (160 aa).

Belongs to the BetVI family.

The polypeptide is Major pollen allergen Cor a 1 isoforms 5, 6, 11 and 16 (Corylus avellana (European hazel)).